Consider the following 366-residue polypeptide: Alanine racemase (366 aa).

Lysine 40 functions as the Proton acceptor; specific for D-alanine in the catalytic mechanism. An N6-(pyridoxal phosphate)lysine modification is found at lysine 40. Residue arginine 136 coordinates substrate. Tyrosine 263 (proton acceptor; specific for L-alanine) is an active-site residue. Methionine 310 serves as a coordination point for substrate.

Belongs to the alanine racemase family. Requires pyridoxal 5'-phosphate as cofactor.

The catalysed reaction is L-alanine = D-alanine. Its pathway is amino-acid biosynthesis; D-alanine biosynthesis; D-alanine from L-alanine: step 1/1. Functionally, catalyzes the interconversion of L-alanine and D-alanine. May also act on other amino acids. The chain is Alanine racemase (alr) from Streptococcus pyogenes serotype M6 (strain ATCC BAA-946 / MGAS10394).